Reading from the N-terminus, the 560-residue chain is MRRGKSIVLSLLLWHFPVWAACPDWSPARANDEIARLQQQLAQWNDSYWQQGVSAVDDSVYDQLSAQLVQWQRCFGGDTGAELAPPVSGSLPHPVPHTGVRKLADKQAVQQWMRKRSDLWVQPKVDGVAVTLVYRDGRLVSAISRGNGLKGEDWTQKVRLIPAVPQSTKGALANSTLQGEIFLLHDNHIQRQMGGMNARSKVAGMMMRQNNTSSLQSLSVFIWAWPDGPATMPERLRQLSGAGFGFAQQYSQPVKSADDVERVRTAWWTTGLPFVTDGVVVRTGKEPEARHWMPGQGDWLVAWKYPPVAKVAEVTGVQFAVGKSGKISVVASLAPVMLDDKRVKRVNVGSVRRWEEWDIAPGDHILVSLAGQGIPRIDKVVWRSTQRDKPAPPGNRYNALTCFYATEVCQEQFIARLVWLGSKEALEVDGMGEAGWRVLHQAHRFEHIFSWLALTQEQLQATPGFSKEKSKQLWHQFNLVRHRPFIRWVMAMGIPLTQGALKANGDRSWGQLLARTAEYWQQLPTTGEGRARRVIQWRDNPEIRALGNWLAARHINGFSP.

The active-site N6-AMP-lysine intermediate is the Lys124.

It belongs to the NAD-dependent DNA ligase family. LigB subfamily.

The enzyme catalyses NAD(+) + (deoxyribonucleotide)n-3'-hydroxyl + 5'-phospho-(deoxyribonucleotide)m = (deoxyribonucleotide)n+m + AMP + beta-nicotinamide D-nucleotide.. Catalyzes the formation of phosphodiester linkages between 5'-phosphoryl and 3'-hydroxyl groups in double-stranded DNA using NAD as a coenzyme and as the energy source for the reaction. The chain is DNA ligase B from Citrobacter koseri (strain ATCC BAA-895 / CDC 4225-83 / SGSC4696).